Consider the following 642-residue polypeptide: Threonine--tRNA ligase (642 aa).

The 63-residue stretch at 1 to 63 (MSEIVVTLPD…TDDCELVIVT (63 aa)) folds into the TGS domain. The tract at residues 242-533 (DHRKLGQELD…LIEHFDGNFP (292 aa)) is catalytic. Zn(2+) is bound by residues C334, H385, and H510.

It belongs to the class-II aminoacyl-tRNA synthetase family. Homodimer. Zn(2+) serves as cofactor.

The protein resides in the cytoplasm. It carries out the reaction tRNA(Thr) + L-threonine + ATP = L-threonyl-tRNA(Thr) + AMP + diphosphate + H(+). In terms of biological role, catalyzes the attachment of threonine to tRNA(Thr) in a two-step reaction: L-threonine is first activated by ATP to form Thr-AMP and then transferred to the acceptor end of tRNA(Thr). This is Threonine--tRNA ligase from Natronomonas pharaonis (strain ATCC 35678 / DSM 2160 / CIP 103997 / JCM 8858 / NBRC 14720 / NCIMB 2260 / Gabara) (Halobacterium pharaonis).